A 321-amino-acid chain; its full sequence is MATSDMTAEGPERHGRRPAAVLIAGPTASGKSALALKLAQASGGTVINTDSMQVYRDLRIITARPTPDEEALAPHRLYGTVDAAVNFSAGAYVEAAAAALAEVRAAGRLPILIGGTGLYFKALTRGLSAVPPVPAEVRDAVRLRLDRDGVQALHAELARQDPEAAARLAPADRTRIARALEVVLATGRPLADWHQQTSPPLLPPDDVVAVFLAPDREALYARIDSRFAAMLQGGALDEVAALAERQLDPLLPAMKAHGVPALIRHLRGEITLEEAASIGAADTRHYAKRQFTWFRHQLPEFKWVRPEEADAFLNTVIPGRA.

ATP is bound at residue 25-32 (GPTASGKS). Residue 27–32 (TASGKS) coordinates substrate. The interaction with substrate tRNA stretch occupies residues 50 to 53 (DSMQ).

The protein belongs to the IPP transferase family. As to quaternary structure, monomer. It depends on Mg(2+) as a cofactor.

It catalyses the reaction adenosine(37) in tRNA + dimethylallyl diphosphate = N(6)-dimethylallyladenosine(37) in tRNA + diphosphate. Its function is as follows. Catalyzes the transfer of a dimethylallyl group onto the adenine at position 37 in tRNAs that read codons beginning with uridine, leading to the formation of N6-(dimethylallyl)adenosine (i(6)A). The chain is tRNA dimethylallyltransferase from Rhodopseudomonas palustris (strain ATCC BAA-98 / CGA009).